A 690-amino-acid chain; its full sequence is Beta-galactosidase (690 aa).

Position 173 (asparagine 173) interacts with substrate. The active-site Proton donor is the glutamate 174. Tryptophan 345 contributes to the substrate binding site.

Belongs to the glycosyl hydrolase 42 family.

The enzyme catalyses Hydrolysis of terminal non-reducing beta-D-galactose residues in beta-D-galactosides.. Activity stimulated by beta-mercaptoethanol. Its function is as follows. Highly specific towards beta-D-galactoside substrates. Hydrolyzes 5-bromo-4-chloro-3-indolyl-beta-D-galactopyranoside (X-Gal) and o-nitrophenyl-beta-D-galactopyranoside (ONPG). Has activity against p-nitrophenyl(pNP)-beta-D-galactoside, but not significantly at all towards pNP-alpha-D-galactoside, pNP-beta-D-glucoside, pNP-beta-D-mannoside, pNP-beta-L-fucoside, pNP-beta-D-xyloside, pNP-beta-L-arabinoside, pNP-beta-D-galuronide, pNP-beta-D-glucuronide, pNP-beta-D-lactoside or pNP-beta-D-cellobioside. This Arthrobacter sp protein is Beta-galactosidase.